Reading from the N-terminus, the 202-residue chain is Recombination protein RecR (202 aa).

The C4-type zinc-finger motif lies at 58–73 (CANCGNLTDKKLCDIC). The 98-residue stretch at 81-178 (SVITVVEDSM…KVSRIAMGVP (98 aa)) folds into the Toprim domain.

The protein belongs to the RecR family.

May play a role in DNA repair. It seems to be involved in an RecBC-independent recombinational process of DNA repair. It may act with RecF and RecO. The polypeptide is Recombination protein RecR (Finegoldia magna (strain ATCC 29328 / DSM 20472 / WAL 2508) (Peptostreptococcus magnus)).